The sequence spans 86 residues: Weak neurotoxin WNTX34 (86 aa).

The N-terminal stretch at 1-21 (MKTLLLTLVVVTIVCLDLGYS) is a signal peptide. 5 disulfides stabilise this stretch: Cys24–Cys45, Cys27–Cys32, Cys38–Cys63, Cys67–Cys78, and Cys79–Cys84.

The protein belongs to the three-finger toxin family. Ancestral subfamily. Orphan group II sub-subfamily. Expressed by the venom gland.

Its subcellular location is the secreted. Functionally, binds with low affinity to muscular (alpha-1-beta-1-delta-epsilon/CHRNA1-CHRNB1-CHRND-CHRNE) and very low affinity to neuronal (alpha-7/CHRNA7) nicotinic acetylcholine receptor (nAChR). This chain is Weak neurotoxin WNTX34, found in Ophiophagus hannah (King cobra).